The primary structure comprises 802 residues: Ribosome-releasing factor 2, mitochondrial (802 aa).

In terms of domain architecture, tr-type G spans 13 to 297 (KKIRNIGIIA…AVVDFLPSPA (285 aa)). GTP-binding positions include 22–29 (AHIDAGKT), 86–90 (DTPGH), and 140–143 (NKMD).

It belongs to the TRAFAC class translation factor GTPase superfamily. Classic translation factor GTPase family. EF-G/EF-2 subfamily.

Its subcellular location is the mitochondrion. Functionally, mitochondrial GTPase that mediates the disassembly of ribosomes from messenger RNA at the termination of mitochondrial protein biosynthesis. Not involved in the GTP-dependent ribosomal translocation step during translation elongation. This is Ribosome-releasing factor 2, mitochondrial from Yarrowia lipolytica (strain CLIB 122 / E 150) (Yeast).